The chain runs to 475 residues: MADKIDISLYEKARIVVYGDIMLDRYWYGQASRISPEAPIPVVNVDQIEARPGGAANVALNVVALGASVELMGVVGDDQESRELETLLNKKSINCHFHRLNDHPTVTKLRVLGQNQQLLRLDFEKTLKHYEDKGLLQRYQHSLSHAQAVILSDYAKGALFNVTALIQRAREKGLPVLVDPKSVDFSRYAGATLLTPNLKEFEAVVGHCRTDQELESKARALIHQYRFEAILITRGKQGMMLIQKEGAAINLVAHAREVYDVTGAGDTVIAVMAASLAAGGDFYEAAQLANLAAGLVVRKLGAATVTVPELRRALHQITASHHGILSEKALLLAVADARAHGETIVMTNGCFDILHAGHVHYLEAAKAMGHRLIVAVNDDNSVRRLKGKDRPINSLQARMEVLTALRAIDWVVPFSEDTPARLITEVLPNILVKGGDYQPSQIAGGDEVVKNGGKVLTIPIKEGFSTSRLVEKMLN.

Positions 1 to 321 (MADKIDISLY…RALHQITASH (321 aa)) are ribokinase. An ATP-binding site is contributed by 197 to 200 (NLKE). Aspartate 266 is an active-site residue. The tract at residues 346-475 (MTNGCFDILH…TSRLVEKMLN (130 aa)) is cytidylyltransferase.

The protein in the N-terminal section; belongs to the carbohydrate kinase PfkB family. It in the C-terminal section; belongs to the cytidylyltransferase family. Homodimer.

It carries out the reaction D-glycero-beta-D-manno-heptose 7-phosphate + ATP = D-glycero-beta-D-manno-heptose 1,7-bisphosphate + ADP + H(+). It catalyses the reaction D-glycero-beta-D-manno-heptose 1-phosphate + ATP + H(+) = ADP-D-glycero-beta-D-manno-heptose + diphosphate. It functions in the pathway nucleotide-sugar biosynthesis; ADP-L-glycero-beta-D-manno-heptose biosynthesis; ADP-L-glycero-beta-D-manno-heptose from D-glycero-beta-D-manno-heptose 7-phosphate: step 1/4. It participates in nucleotide-sugar biosynthesis; ADP-L-glycero-beta-D-manno-heptose biosynthesis; ADP-L-glycero-beta-D-manno-heptose from D-glycero-beta-D-manno-heptose 7-phosphate: step 3/4. Catalyzes the phosphorylation of D-glycero-D-manno-heptose 7-phosphate at the C-1 position to selectively form D-glycero-beta-D-manno-heptose-1,7-bisphosphate. Its function is as follows. Catalyzes the ADP transfer from ATP to D-glycero-beta-D-manno-heptose 1-phosphate, yielding ADP-D-glycero-beta-D-manno-heptose. In Coxiella burnetii (strain Dugway 5J108-111), this protein is Bifunctional protein HldE.